The primary structure comprises 420 residues: Glucose-1-phosphate adenylyltransferase (420 aa).

Alpha-D-glucose 1-phosphate is bound by residues Y107, G172, 187–188 (EK), and S205.

It belongs to the bacterial/plant glucose-1-phosphate adenylyltransferase family. As to quaternary structure, homotetramer.

The catalysed reaction is alpha-D-glucose 1-phosphate + ATP + H(+) = ADP-alpha-D-glucose + diphosphate. It functions in the pathway glycan biosynthesis; glycogen biosynthesis. In terms of biological role, involved in the biosynthesis of ADP-glucose, a building block required for the elongation reactions to produce glycogen. Catalyzes the reaction between ATP and alpha-D-glucose 1-phosphate (G1P) to produce pyrophosphate and ADP-Glc. This chain is Glucose-1-phosphate adenylyltransferase, found in Rhizobium etli (strain CIAT 652).